The sequence spans 298 residues: uncharacterized protein (298 aa).

This is an uncharacterized protein from Archaeoglobus fulgidus (strain ATCC 49558 / DSM 4304 / JCM 9628 / NBRC 100126 / VC-16).